The primary structure comprises 593 residues: Cytochrome c oxidase polypeptide 1 (593 aa).

2 helical membrane-spanning segments follow: residues 5 to 25 (ASSI…VAVL) and 71 to 91 (IGIL…VSVL). H117 lines the Fe(II)-heme a pocket. 6 helical membrane-spanning segments follow: residues 122–142 (LFLF…PLLI), 154–174 (AIAF…FLIP), 204–224 (GLHL…ATIF), 246–266 (QSGL…MLLL), 288–308 (LFWF…MGIV), and 320–340 (LFGF…SFGV). The Cu cation site is built by H294 and Y298. Residues 294–298 (HPEVY) constitute a cross-link (1'-histidyl-3'-tyrosine (His-Tyr)). Residues H343 and H344 each contribute to the Cu cation site. The next 5 helical transmembrane spans lie at 358 to 378 (FMAV…NWIT), 401 to 421 (FIIG…LILH), 425 to 445 (YVVG…LFAA), 467 to 487 (FWTA…LGYG), and 506 to 526 (LATV…FNMA). H429 is a heme a3 binding site. H431 lines the Fe(II)-heme a pocket. Residues 562-593 (TTVLPDGGDEAQSEADAVTDGGQPAADSDTES) form a disordered region.

Belongs to the heme-copper respiratory oxidase family.

It is found in the cell membrane. It catalyses the reaction 4 Fe(II)-[cytochrome c] + O2 + 8 H(+)(in) = 4 Fe(III)-[cytochrome c] + 2 H2O + 4 H(+)(out). Its pathway is energy metabolism; oxidative phosphorylation. In terms of biological role, cytochrome c oxidase is the component of the respiratory chain that catalyzes the reduction of oxygen to water. Subunits 1-3 form the functional core of the enzyme complex. CO I is the catalytic subunit of the enzyme. Electrons originating in cytochrome c are transferred via the copper A center of subunit 2 and heme A of subunit 1 to the bimetallic center formed by heme A3 and copper B. The protein is Cytochrome c oxidase polypeptide 1 (coxA2) of Halobacterium salinarum (strain ATCC 700922 / JCM 11081 / NRC-1) (Halobacterium halobium).